An 822-amino-acid polypeptide reads, in one-letter code: Sushi domain-containing protein 2 (822 aa).

An N-terminal signal peptide occupies residues 1-27 (MKPALLPWALLLLATALGPGPGPTADA). An SMB domain is found at 28–66 (QESCSMRCGALDGPCSCHPTCSGLGTCCLDFRDFCLEIL). The Extracellular portion of the chain corresponds to 28–785 (QESCSMRCGA…PKCQPGRSYA (758 aa)). Intrachain disulfides connect Cys-31-Cys-35, Cys-31-Cys-44, Cys-35-Cys-62, Cys-42-Cys-44, Cys-42-Cys-55, Cys-48-Cys-54, and Cys-55-Cys-62. Asn-162 and Asn-177 each carry an N-linked (GlcNAc...) asparagine glycan. Positions 285 to 433 (PVAWARTQCQ…PDCPRYMQRR (149 aa)) constitute an AMOP domain. Positions 445–639 (RLASAFGDPH…NWTVHNASSL (195 aa)) constitute a VWFD domain. An N-linked (GlcNAc...) asparagine glycan is attached at Asn-522. Positions 723–780 (VSCGWLAPPPNGQKEGNRYLAGSTIYFHCDNGYSLAGAETSTCQADGTWSSPTPKCQP) constitute a Sushi domain. Intrachain disulfides connect Cys-725–Cys-765 and Cys-751–Cys-778. A helical membrane pass occupies residues 786–806 (VLLGIIFGGLAVVAAVALVYV). At 807–822 (LLRRRKGNTHVWGAQP) the chain is on the cytoplasmic side.

Interacts with LGALS1; leads to an increased amount of LGALS1 on the cell surface. Interacts with GPR15LG; the interaction is direct. In terms of tissue distribution, highly expressed in breast cancer, but shows a restricted expression pattern in normal tissues such as adipose, adrenal gland, kidney, lung, mammary gland, placenta, thyroid, trachea, and uterus. Also expressed in colon; down-regulated in colon cancer tissues.

It localises to the cell membrane. Functionally, may be a cytokine receptor for GPR15LG. May be a tumor suppressor; together with GPR15LG has a growth inhibitory effect on colon cancer cells which includes G1 cell cycle arrest. May play a role in breast tumorigenesis. The sequence is that of Sushi domain-containing protein 2 (SUSD2) from Homo sapiens (Human).